The following is a 59-amino-acid chain: MAVPKKRTSKAKKNARKANWKNQAKTEAQKALSLAKSVLTGKSNGFVYNTLEVADAIVE.

Positions 1 to 19 are enriched in basic residues; that stretch reads MAVPKKRTSKAKKNARKAN. Positions 1-24 are disordered; that stretch reads MAVPKKRTSKAKKNARKANWKNQA.

The protein belongs to the bacterial ribosomal protein bL32 family.

It is found in the plastid. Its subcellular location is the chloroplast. This Porphyra purpurea (Red seaweed) protein is Large ribosomal subunit protein bL32c (rpl32).